The chain runs to 382 residues: DNA replication and repair protein RecF (382 aa).

Residue 30-37 (GPNGHGKS) coordinates ATP.

Belongs to the RecF family.

It localises to the cytoplasm. Its function is as follows. The RecF protein is involved in DNA metabolism; it is required for DNA replication and normal SOS inducibility. RecF binds preferentially to single-stranded, linear DNA. It also seems to bind ATP. This is DNA replication and repair protein RecF from Magnetococcus marinus (strain ATCC BAA-1437 / JCM 17883 / MC-1).